A 183-amino-acid chain; its full sequence is MADPSLYTYPSPLQGYENLAPLGTEVSPDGKSLLNPETGIKSKSYEKFTEPLDSGIRGAFDVHIYHFQKNKEQAKFARELWERIRREFPELRIYRFWEEPIGPHPVAMFEVNLFTPEQFGAFIPWLVINRGPLSALVHPNTVDEKGELLDEERDHTQRAIWMGEQLPLDLSLVKRLKQQKAAH.

It to A.muscaria DOPA 4,5-dioxygenase.

This is an uncharacterized protein from Botryotinia fuckeliana (Noble rot fungus).